Here is a 297-residue protein sequence, read N- to C-terminus: Phosphoribosylaminoimidazole-succinocarboxamide synthase (297 aa).

It belongs to the SAICAR synthetase family.

It catalyses the reaction 5-amino-1-(5-phospho-D-ribosyl)imidazole-4-carboxylate + L-aspartate + ATP = (2S)-2-[5-amino-1-(5-phospho-beta-D-ribosyl)imidazole-4-carboxamido]succinate + ADP + phosphate + 2 H(+). It participates in purine metabolism; IMP biosynthesis via de novo pathway; 5-amino-1-(5-phospho-D-ribosyl)imidazole-4-carboxamide from 5-amino-1-(5-phospho-D-ribosyl)imidazole-4-carboxylate: step 1/2. In Mycobacterium tuberculosis (strain ATCC 25177 / H37Ra), this protein is Phosphoribosylaminoimidazole-succinocarboxamide synthase.